The chain runs to 562 residues: Methionine--tRNA ligase, mitochondrial (562 aa).

The N-terminal 10 residues, 1-10 (MLRSLALRTF), are a transit peptide targeting the mitochondrion. Residues 43–53 (FYVNAAPHLGH) carry the 'HIGH' region motif. The short motif at 332–336 (KMSKS) is the 'KMSKS' region element. Lys-335 is a binding site for ATP.

Belongs to the class-I aminoacyl-tRNA synthetase family.

The protein resides in the mitochondrion matrix. The catalysed reaction is tRNA(Met) + L-methionine + ATP = L-methionyl-tRNA(Met) + AMP + diphosphate. The protein is Methionine--tRNA ligase, mitochondrial (mars2) of Xenopus laevis (African clawed frog).